We begin with the raw amino-acid sequence, 919 residues long: Bifunctional uridylyltransferase/uridylyl-removing enzyme (919 aa).

Positions 1–373 (MTDPKVPRQR…LAGFNAKSRM (373 aa)) are uridylyltransferase. Residues 374 to 727 (LKGYTVFGGK…CEFDEERGAT (354 aa)) are uridylyl-removing. The region spanning 489–611 (VDEHTIRAIG…VQSLERLRHL (123 aa)) is the HD domain. 2 ACT domains span residues 728–811 (LVTV…LAKR) and 839–919 (VIEV…LEPA).

It belongs to the GlnD family. It depends on Mg(2+) as a cofactor.

It catalyses the reaction [protein-PII]-L-tyrosine + UTP = [protein-PII]-uridylyl-L-tyrosine + diphosphate. It carries out the reaction [protein-PII]-uridylyl-L-tyrosine + H2O = [protein-PII]-L-tyrosine + UMP + H(+). Its activity is regulated as follows. Uridylyltransferase (UTase) activity is inhibited by glutamine, while glutamine activates uridylyl-removing (UR) activity. Modifies, by uridylylation and deuridylylation, the PII regulatory proteins (GlnB and homologs), in response to the nitrogen status of the cell that GlnD senses through the glutamine level. Under low glutamine levels, catalyzes the conversion of the PII proteins and UTP to PII-UMP and PPi, while under higher glutamine levels, GlnD hydrolyzes PII-UMP to PII and UMP (deuridylylation). Thus, controls uridylylation state and activity of the PII proteins, and plays an important role in the regulation of nitrogen assimilation and metabolism. This is Bifunctional uridylyltransferase/uridylyl-removing enzyme from Erythrobacter litoralis (strain HTCC2594).